Consider the following 584-residue polypeptide: Methionine--tRNA ligase (584 aa).

The 'HIGH' region signature appears at 12 to 22 (PYANGDLHLGH). Zn(2+) contacts are provided by cysteine 144, cysteine 147, cysteine 157, and cysteine 160. The 'KMSKS' region motif lies at 334 to 338 (QFSTS). Threonine 337 serves as a coordination point for ATP. A disordered region spans residues 541–563 (EGRDRWAPSELEAGRPLPPPQPL).

The protein belongs to the class-I aminoacyl-tRNA synthetase family. MetG type 1 subfamily. Monomer. Zn(2+) is required as a cofactor.

It is found in the cytoplasm. The catalysed reaction is tRNA(Met) + L-methionine + ATP = L-methionyl-tRNA(Met) + AMP + diphosphate. Is required not only for elongation of protein synthesis but also for the initiation of all mRNA translation through initiator tRNA(fMet) aminoacylation. This is Methionine--tRNA ligase from Thermomicrobium roseum (strain ATCC 27502 / DSM 5159 / P-2).